Consider the following 321-residue polypeptide: Peroxidase 27 (321 aa).

Residues 1 to 23 (MAASKRLVVSCLFLVLLFAQANS) form the signal peptide. Cystine bridges form between cysteine 35-cysteine 113, cysteine 68-cysteine 73, cysteine 119-cysteine 317, and cysteine 196-cysteine 228. The active-site Proton acceptor is the histidine 66. Residues aspartate 67, valine 70, glycine 72, aspartate 74, and serine 76 each contribute to the Ca(2+) site. Residue proline 159 participates in substrate binding. N-linked (GlcNAc...) asparagine glycosylation is present at asparagine 164. Histidine 189 is a heme b binding site. Ca(2+) is bound at residue threonine 190. N-linked (GlcNAc...) asparagine glycosylation is present at asparagine 205. Residues aspartate 240, serine 243, and aspartate 248 each contribute to the Ca(2+) site.

The protein belongs to the peroxidase family. Classical plant (class III) peroxidase subfamily. Heme b serves as cofactor. The cofactor is Ca(2+). In terms of tissue distribution, expressed in the whole plant, but preferentially in roots and flowers.

The protein resides in the secreted. It catalyses the reaction 2 a phenolic donor + H2O2 = 2 a phenolic radical donor + 2 H2O. Removal of H(2)O(2), oxidation of toxic reductants, biosynthesis and degradation of lignin, suberization, auxin catabolism, response to environmental stresses such as wounding, pathogen attack and oxidative stress. These functions might be dependent on each isozyme/isoform in each plant tissue. This Arabidopsis thaliana (Mouse-ear cress) protein is Peroxidase 27 (PER27).